A 461-amino-acid polypeptide reads, in one-letter code: ATP synthase subunit beta (461 aa).

151-158 (GGAGVGKT) lines the ATP pocket.

It belongs to the ATPase alpha/beta chains family. As to quaternary structure, F-type ATPases have 2 components, CF(1) - the catalytic core - and CF(0) - the membrane proton channel. CF(1) has five subunits: alpha(3), beta(3), gamma(1), delta(1), epsilon(1). CF(0) has three main subunits: a(1), b(2) and c(9-12). The alpha and beta chains form an alternating ring which encloses part of the gamma chain. CF(1) is attached to CF(0) by a central stalk formed by the gamma and epsilon chains, while a peripheral stalk is formed by the delta and b chains.

Its subcellular location is the cell inner membrane. The catalysed reaction is ATP + H2O + 4 H(+)(in) = ADP + phosphate + 5 H(+)(out). In terms of biological role, produces ATP from ADP in the presence of a proton gradient across the membrane. The catalytic sites are hosted primarily by the beta subunits. This Alteromonas mediterranea (strain DSM 17117 / CIP 110805 / LMG 28347 / Deep ecotype) protein is ATP synthase subunit beta.